A 187-amino-acid polypeptide reads, in one-letter code: Elongation factor P (187 aa).

It belongs to the elongation factor P family.

The protein localises to the cytoplasm. The protein operates within protein biosynthesis; polypeptide chain elongation. Involved in peptide bond synthesis. Stimulates efficient translation and peptide-bond synthesis on native or reconstituted 70S ribosomes in vitro. Probably functions indirectly by altering the affinity of the ribosome for aminoacyl-tRNA, thus increasing their reactivity as acceptors for peptidyl transferase. The chain is Elongation factor P from Chelativorans sp. (strain BNC1).